Here is a 503-residue protein sequence, read N- to C-terminus: MAIWAKAEAWLAGPWLALNRARTLGTRAVLAPKGVLPFEAIPQFPGKKWMRVLQLWREQGFENNHLEMHQTFQELGPIFRFDVGGRNMVLVMLPEDVERCQKVEGLHPQRDVPGPWLAYRHLRGHKCGVFLLNGPTWRLDRLQLNPGVLSLQAMQKFTPLVDGVARDFSQALRARVMQNARGSLTLDIKPSIFRYTIEASNLVLFGERLGLLAHQPNPESLDFIHALEVMFKSTVQLMFMPRSLSRWTSTGTWKEHFEAWDCIFQYANKAIQRLYQELTLGHPWHYSGVVAELLTHANMTVDAIKANSIDLTAGSVDTTAYPLLMTLFELARNPEVQQALRQESLAAAARISENPQKAITELPLLRAALKETLRLYPVGIFLDRCVTSDLVLQNYHIPAGTLVKVLLYSLGRNPAVFARPERYHPQRWLDNQGSGTRFPHLAFGFGMRQCLGRRLAQVEMLLLLHHVLKNFLVETLVQEDIKMIYRFIMTPSTLPLLTFRAIS.

The N-terminal 24 residues, 1–24 (MAIWAKAEAWLAGPWLALNRARTL), are a transit peptide targeting the mitochondrion. A heme-binding site is contributed by cysteine 450.

The protein belongs to the cytochrome P450 family. The cofactor is heme.

The protein resides in the mitochondrion inner membrane. The enzyme catalyses a steroid + 2 reduced [adrenodoxin] + O2 + 2 H(+) = an 11beta-hydroxysteroid + 2 oxidized [adrenodoxin] + H2O. It catalyses the reaction 11-deoxycortisol + 2 reduced [adrenodoxin] + O2 + 2 H(+) = cortisol + 2 oxidized [adrenodoxin] + H2O. It carries out the reaction 21-hydroxyprogesterone + 2 reduced [adrenodoxin] + O2 + 2 H(+) = corticosterone + 2 oxidized [adrenodoxin] + H2O. The catalysed reaction is corticosterone + 2 reduced [adrenodoxin] + O2 + 2 H(+) = 18-hydroxycorticosterone + 2 oxidized [adrenodoxin] + H2O. The enzyme catalyses 18-hydroxycorticosterone + 2 reduced [adrenodoxin] + O2 + 2 H(+) = aldosterone + 2 oxidized [adrenodoxin] + 2 H2O. It catalyses the reaction 21-hydroxyprogesterone + 2 reduced [adrenodoxin] + O2 + 2 H(+) = 19-hydroxy-11-deoxycorticosterone + 2 oxidized [adrenodoxin] + H2O. It carries out the reaction 19-hydroxy-11-deoxycorticosterone + 2 reduced [adrenodoxin] + O2 + 2 H(+) = 19-oxo-11-deoxycorticosterone + 2 oxidized [adrenodoxin] + 2 H2O. The protein operates within steroid biosynthesis; glucocorticoid biosynthesis. Its pathway is steroid hormone biosynthesis. A cytochrome P450 monooxygenase that catalyzes the biosynthesis of aldosterone and other adrenal corticoids. Differing from other species (such as human, rat and mice), it is able to catalyze three sequential oxidative reactions of 11-deoxycorticosterone (21-hydroxyprogesterone), namely 11-beta hydroxylation, followed by two successive oxidations at C18 yielding 18-hydroxy and then 18-oxo intermediates, and ending with the formation of aldosterone. Steroid 11beta, 18- and 19-hydroxylase. Mechanistically, uses molecular oxygen inserting one oxygen atom into a substrate and reducing the second into a water molecule. Two electrons are provided by NADPH via a two-protein mitochondrial transfer system comprising flavoprotein FDXR (adrenodoxin/ferredoxin reductase) and nonheme iron-sulfur protein FDX1 or FDX2 (adrenodoxin/ferredoxin). This chain is Cytochrome P450 11B1, mitochondrial (CYP11B1), found in Sus scrofa (Pig).